The chain runs to 468 residues: ATP synthase subunit beta (468 aa).

ATP is bound at residue 155 to 162 (GGAGVGKT).

This sequence belongs to the ATPase alpha/beta chains family. F-type ATPases have 2 components, CF(1) - the catalytic core - and CF(0) - the membrane proton channel. CF(1) has five subunits: alpha(3), beta(3), gamma(1), delta(1), epsilon(1). CF(0) has three main subunits: a(1), b(2) and c(9-12). The alpha and beta chains form an alternating ring which encloses part of the gamma chain. CF(1) is attached to CF(0) by a central stalk formed by the gamma and epsilon chains, while a peripheral stalk is formed by the delta and b chains.

Its subcellular location is the cell membrane. The catalysed reaction is ATP + H2O + 4 H(+)(in) = ADP + phosphate + 5 H(+)(out). Its function is as follows. Produces ATP from ADP in the presence of a proton gradient across the membrane. The catalytic sites are hosted primarily by the beta subunits. This Enterococcus hirae (strain ATCC 9790 / DSM 20160 / JCM 8729 / LMG 6399 / NBRC 3181 / NCIMB 6459 / NCDO 1258 / NCTC 12367 / WDCM 00089 / R) protein is ATP synthase subunit beta.